Here is a 754-residue protein sequence, read N- to C-terminus: Catalase-peroxidase (754 aa).

Positions 1-29 (MGTQPARKLRNRVFPHPHNHRKEKPMAND) are disordered. Residues 7–23 (RKLRNRVFPHPHNHRKE) are compositionally biased toward basic residues. The Tryptophan radical intermediate role is filled by Trp106. The tryptophyl-tyrosyl-methioninium (Trp-Tyr) (with M-275) cross-link spans 122-249 (WHAAGTYRIA…LAAVQMGLIY (128 aa)). Residue His123 is the Proton acceptor of the active site. A cross-link (tryptophyl-tyrosyl-methioninium (Tyr-Met) (with W-122)) is located at residues 249-275 (YVNPEGVDGHPDPLCTAQDVRTTFARM). His290 provides a ligand contact to heme b.

This sequence belongs to the peroxidase family. Peroxidase/catalase subfamily. As to quaternary structure, homodimer. It depends on heme b as a cofactor. In terms of processing, formation of the three residue Trp-Tyr-Met cross-link is important for the catalase, but not the peroxidase activity of the enzyme.

It catalyses the reaction H2O2 + AH2 = A + 2 H2O. The enzyme catalyses 2 H2O2 = O2 + 2 H2O. Functionally, bifunctional enzyme with both catalase and broad-spectrum peroxidase activity. Also displays NADH oxidase, isoniazid hydrazine lyase and isonicotinoyl-NAD synthase activities. This is Catalase-peroxidase from Synechocystis sp. (strain ATCC 27184 / PCC 6803 / Kazusa).